The sequence spans 463 residues: tRNA-2-methylthio-N(6)-dimethylallyladenosine synthase (463 aa).

The MTTase N-terminal domain occupies 18 to 136; it reads RKLYIETYGC…LPNLVGAAEQ (119 aa). Cysteine 27, cysteine 63, cysteine 100, cysteine 174, cysteine 178, and cysteine 181 together coordinate [4Fe-4S] cluster. In terms of domain architecture, Radical SAM core spans 160–392; sequence GGVHINGFVS…IALQNRLSEE (233 aa). The region spanning 395-458 is the TRAM domain; it reads KRDIGKTFEV…SATLFGEVVE (64 aa).

This sequence belongs to the methylthiotransferase family. MiaB subfamily. In terms of assembly, monomer. The cofactor is [4Fe-4S] cluster.

It is found in the cytoplasm. The catalysed reaction is N(6)-dimethylallyladenosine(37) in tRNA + (sulfur carrier)-SH + AH2 + 2 S-adenosyl-L-methionine = 2-methylsulfanyl-N(6)-dimethylallyladenosine(37) in tRNA + (sulfur carrier)-H + 5'-deoxyadenosine + L-methionine + A + S-adenosyl-L-homocysteine + 2 H(+). Its function is as follows. Catalyzes the methylthiolation of N6-(dimethylallyl)adenosine (i(6)A), leading to the formation of 2-methylthio-N6-(dimethylallyl)adenosine (ms(2)i(6)A) at position 37 in tRNAs that read codons beginning with uridine. This chain is tRNA-2-methylthio-N(6)-dimethylallyladenosine synthase, found in Porphyromonas gingivalis (strain ATCC BAA-308 / W83).